A 1379-amino-acid polypeptide reads, in one-letter code: Increased rDNA silencing protein 4 homolog (1379 aa).

Disordered stretches follow at residues 1–25 (MDAI…RNLS), 138–159 (TSTR…HHPR), 240–314 (EFDF…PLPS), 337–370 (SQPF…QAIM), 534–573 (ASKR…ASQQ), 768–816 (TDLH…NDIG), 1047–1110 (DAPS…KDSQ), and 1168–1208 (AVHE…DGKY). Residues 250–259 (PSDKNLEKLK) are compositionally biased toward basic and acidic residues. Over residues 262–287 (ASKQASESQSLKNMESLSLARSSPIL) the composition is skewed to polar residues. Residues 541-555 (SQQTESASKSSSNIS) are compositionally biased toward low complexity. Polar residues predominate over residues 562–573 (PPSNFSISASQQ). The span at 770 to 780 (LHRKPRRKHKS) shows a compositional bias: basic residues. A compositionally biased stretch (acidic residues) spans 793–802 (DESPQSDEVE). The 90-residue stretch at 1240–1329 (AANKGYLLSK…DSVWLSSKRM (90 aa)) folds into the EH domain. The region spanning 1273–1308 (APTSVLAKIYDLVDRHHTGVLGRDEFIVGMFLIDQY) is the EF-hand domain.

This sequence belongs to the IRS4 family.

In terms of biological role, positive regulator of phosphatidylinositol 4,5-bisphosphate turnover and negatively regulates signaling through the cell integrity pathway. Involved in rDNA silencing. The polypeptide is Increased rDNA silencing protein 4 homolog (Schizosaccharomyces pombe (strain 972 / ATCC 24843) (Fission yeast)).